Consider the following 442-residue polypeptide: Kelch domain-containing protein 10 (442 aa).

The interval 1–58 (MSAAQGWDRNRRRGGGAAGGGGGGSGAGGGSGGNGGRGTGQLNRFVQLSGRPHLPGKK) is disordered. Position 13 is an omega-N-methylarginine (Arg-13). A compositionally biased stretch (gly residues) spans 15–39 (GGAAGGGGGGSGAGGGSGGNGGRGT). Kelch repeat units lie at residues 87-154 (RPPP…PREL), 155-198 (ASMS…ALLS), 199-260 (CRGK…PEER), 261-319 (YRHE…RRCH), 320-364 (SCVQ…PEPV), and 365-403 (YFHC…LVVP). The interval 401–442 (VVPSLLELAWEKLLAAFPNLANLSRTQLLHLGLTQGLIERLK) is interaction with CUL2.

This sequence belongs to the KLHDC10 family. In terms of assembly, component of a CRL2 E3 ubiquitin-protein ligase complex, also named ECS (Elongin BC-CUL2/5-SOCS-box protein) complex, composed of CUL2, Elongin BC (ELOB and ELOC), RBX1 and substrate-specific adapter KLHDC10. Interacts (via the 6 Kelch repeats) with PPP5C.

The protein resides in the nucleus. It is found in the cytoplasm. The protein operates within protein modification; protein ubiquitination. Its function is as follows. Substrate-recognition component of a Cul2-RING (CRL2) E3 ubiquitin-protein ligase complex of the DesCEND (destruction via C-end degrons) pathway, which recognizes a C-degron located at the extreme C-terminus of target proteins, leading to their ubiquitination and degradation. The C-degron recognized by the DesCEND pathway is usually a motif of less than ten residues and can be present in full-length proteins, truncated proteins or proteolytically cleaved forms. The CRL2(KLHDC10) complex specifically recognizes proteins with a proline-glycine (Pro-Gly) or an alanine tail (CAT tail) at the C-terminus, leading to their ubiquitination and degradation. The CRL2(KLHDC10) complex is involved in the ribosome-associated quality control (RQC) pathway, which mediates the extraction of incompletely synthesized nascent chains from stalled ribosomes: CRL2(KLHDC10) acts downstream of NEMF and recognizes CAT tails associated with stalled nascent chains, leading to their ubiquitination and degradation. Participates in the oxidative stress-induced cell death through MAP3K5 activation. Inhibits PPP5C phosphatase activity on MAP3K5. Acts as a regulator of necroptosis. This is Kelch domain-containing protein 10 (KLHDC10) from Bos taurus (Bovine).